The sequence spans 139 residues: Trafficking protein particle complex subunit 2-like protein (139 aa).

Belongs to the TRAPP small subunits family. Sedlin subfamily.

It is found in the cytoplasm. The protein resides in the perinuclear region. Its subcellular location is the endoplasmic reticulum. It localises to the golgi apparatus. May play a role in vesicular transport from endoplasmic reticulum to Golgi. The protein is Trafficking protein particle complex subunit 2-like protein (trappc2l) of Xenopus tropicalis (Western clawed frog).